Consider the following 299-residue polypeptide: Maintenance of mitochondrial morphology protein 1 (299 aa).

At 1–15 (MTNIIFSLQPTFTQG) the chain is on the lumenal side. A helical transmembrane segment spans residues 16-36 (LILGQLSVLVLLGLILKYLFL). Topologically, residues 37 to 299 (DSTKNPFETT…QEESKRQEEA (263 aa)) are cytoplasmic. A disordered region spans residues 47–68 (SYHPQFDRKPARKQQAQDSQSQ). Residues 73–281 (DVESLDWFNL…LPGLASVAEA (209 aa)) form the SMP-LTD domain.

This sequence belongs to the MMM1 family. In terms of assembly, homodimer. Component of the ER-mitochondria encounter structure (ERMES) or MDM complex, composed of MMM1, MDM10, MDM12 and MDM34. An MMM1 homodimer associates with one molecule of MDM12 on each side in a pairwise head-to-tail manner, and the SMP-LTD domains of MMM1 and MDM12 generate a continuous hydrophobic tunnel for phospholipid trafficking.

Its subcellular location is the endoplasmic reticulum membrane. In terms of biological role, component of the ERMES/MDM complex, which serves as a molecular tether to connect the endoplasmic reticulum (ER) and mitochondria. Components of this complex are involved in the control of mitochondrial shape and protein biogenesis, and function in nonvesicular lipid trafficking between the ER and mitochondria. The MDM12-MMM1 subcomplex functions in the major beta-barrel assembly pathway that is responsible for biogenesis of all outer membrane beta-barrel proteins, and acts in a late step after the SAM complex. The MDM10-MDM12-MMM1 subcomplex further acts in the TOM40-specific pathway after the action of the MDM12-MMM1 complex. Essential for establishing and maintaining the structure of mitochondria and maintenance of mtDNA nucleoids. The sequence is that of Maintenance of mitochondrial morphology protein 1 from Coprinopsis cinerea (strain Okayama-7 / 130 / ATCC MYA-4618 / FGSC 9003) (Inky cap fungus).